Here is an 86-residue protein sequence, read N- to C-terminus: U22-theraphotoxin-Cg1a (86 aa).

Residues 1–20 form the signal peptide; sequence MKVSVVLAITVLALLSVAYA. Positions 21–51 are excised as a propeptide; the sequence is SEFEEKELVKEVVRTIFLGKEDAALREETDR. 3 cysteine pairs are disulfide-bonded: Cys53–Cys67, Cys60–Cys72, and Cys66–Cys79. Residue Phe85 is modified to Phenylalanine amide.

Belongs to the neurotoxin 10 (Hwtx-1) family. 42 (Jztx-44) subfamily. As to expression, expressed by the venom gland.

It localises to the secreted. Probable ion channel inhibitor. The polypeptide is U22-theraphotoxin-Cg1a (Chilobrachys guangxiensis (Chinese earth tiger tarantula)).